A 641-amino-acid polypeptide reads, in one-letter code: MLV-related proviral Env polyprotein (641 aa).

An N-terminal signal peptide occupies residues 1–32 (MEGPAFSKPLKDKINPWGPLIVLGILIRAGVS). The Extracellular portion of the chain corresponds to 33 to 581 (VQHDSPHQVF…FNRSPWFTTL (549 aa)). Residues Asn43 and Asn58 are each glycosylated (N-linked (GlcNAc...) asparagine). Disulfide bonds link Cys109-Cys126 and Cys118-Cys131. The tract at residues 256-281 (RPPQPPPPGAASIVPETAPPSQQPGT) is disordered. Asn297 carries N-linked (GlcNAc...) asparagine glycosylation. Intrachain disulfides connect Cys307-Cys310, Cys307-Cys534, Cys337-Cys391, Cys356-Cys368, Cys398-Cys411, and Cys526-Cys533. Positions 307 to 310 (CWLC) match the CXXC motif. Residue Asn336 is glycosylated (N-linked (GlcNAc...) asparagine). Asn369 carries an N-linked (GlcNAc...) asparagine glycan. A fusion peptide region spans residues 443–463 (VSLTLALLLGGLTMGGIAAGV). Coiled coils occupy residues 471–520 (VATK…LLFL) and 530–566 (KEEC…SGQG). Positions 509–525 (LQNRRGLDLLFLKEGGL) are immunosuppression. Residues 526–534 (CAALKEECC) carry the CX6CC motif. The chain crosses the membrane as a helical span at residues 582–602 (ISTIMGPLIILLLILLFGPCI). Residue Cys601 is the site of S-palmitoyl cysteine attachment. The Cytoplasmic portion of the chain corresponds to 603-641 (LNRLVQFVKDRISVVQALVLTQQYHQLKSIDPEEVESRE). The YXXL motif; contains endocytosis signal motif lies at 626 to 629 (YHQL).

As to quaternary structure, the mature envelope protein (Env) consists of a trimer of SU-TM heterodimers attached by a labile interchain disulfide bond. Specific enzymatic cleavages in vivo yield mature proteins. Envelope glycoproteins are synthesized as an inactive precursor that is N-glycosylated and processed likely by host cell furin or by a furin-like protease in the Golgi to yield the mature SU and TM proteins. The cleavage site between SU and TM requires the minimal sequence [KR]-X-[KR]-R. The R-peptide is released from the C-terminus of the cytoplasmic tail of the TM protein upon particle formation as a result of proteolytic cleavage by the viral protease. Cleavage of this peptide is required for TM to become fusogenic. Post-translationally, the CXXC motif is highly conserved across a broad range of retroviral envelope proteins. It is thought to participate in the formation of a labile disulfide bond possibly with the CX6CC motif present in the transmembrane protein. Isomerization of the intersubunit disulfide bond to an SU intrachain disulfide bond is thought to occur upon receptor recognition in order to allow membrane fusion. In terms of processing, the transmembrane protein is palmitoylated. The R-peptide is palmitoylated.

It is found in the virion membrane. The protein resides in the cell membrane. Its function is as follows. The surface protein (SU) attaches the virus to the host cell by binding to its receptor. This interaction triggers the refolding of the transmembrane protein (TM) and is thought to activate its fusogenic potential by unmasking its fusion peptide. Fusion occurs at the host cell plasma membrane. Functionally, the transmembrane protein (TM) acts as a class I viral fusion protein. Under the current model, the protein has at least 3 conformational states: pre-fusion native state, pre-hairpin intermediate state, and post-fusion hairpin state. During viral and target cell membrane fusion, the coiled coil regions (heptad repeats) assume a trimer-of-hairpins structure, positioning the fusion peptide in close proximity to the C-terminal region of the ectodomain. The formation of this structure appears to drive apposition and subsequent fusion of viral and target cell membranes. Membranes fusion leads to delivery of the nucleocapsid into the cytoplasm. The sequence is that of MLV-related proviral Env polyprotein from Mus musculus (Mouse).